Reading from the N-terminus, the 457-residue chain is tRNA (guanine(37)-N(1))-methyltransferase (457 aa).

S-adenosyl-L-methionine contacts are provided by residues His-240, 278-279 (DL), 306-307 (DG), and Asn-338.

Belongs to the class I-like SAM-binding methyltransferase superfamily. TRM5/TYW2 family. Monomer.

The protein resides in the mitochondrion matrix. It localises to the nucleus. It is found in the cytoplasm. It carries out the reaction guanosine(37) in tRNA + S-adenosyl-L-methionine = N(1)-methylguanosine(37) in tRNA + S-adenosyl-L-homocysteine + H(+). Functionally, specifically methylates the N1 position of guanosine-37 in various cytoplasmic and mitochondrial tRNAs. Methylation is not dependent on the nature of the nucleoside 5' of the target nucleoside. This is the first step in the biosynthesis of wybutosine (yW), a modified base adjacent to the anticodon of tRNAs and required for accurate decoding. This chain is tRNA (guanine(37)-N(1))-methyltransferase, found in Drosophila melanogaster (Fruit fly).